The following is a 292-amino-acid chain: uncharacterized protein (292 aa).

Its subcellular location is the virion. This is an uncharacterized protein from Acanthamoeba polyphaga (Amoeba).